Reading from the N-terminus, the 630-residue chain is Probable potassium transport system protein Kup 2 (630 aa).

12 consecutive transmembrane segments (helical) span residues 17–37 (FWALTLGGVGVVFGDIGTSPL), 56–76 (VIVLGVLSLILWSLFIVVTAK), 108–128 (VFLMSLGVIGASMFIGDSMIT), 145–165 (PALEHYVVPLTVGILVVLFAF), 176–196 (AFGPVMIVWFSTLAVMGLIHI), 214–234 (FMLSHGMVGLVTIGAVFLAVT), 255–275 (WLFFVLPSLLINYFGQGALVL), 293–313 (FLVPLIVLATAATVIASQAVI), 345–365 (IYLPRVNMLLLIGVLMLVLLF), 375–395 (YGIAVSTTMVADGVMGFVVIW), 402–422 (PAAAAALIFPFVAVDAIFFSA), and 427–447 (LLEGAWVPLLFGLLMATLIWV).

This sequence belongs to the HAK/KUP transporter (TC 2.A.72) family.

Its subcellular location is the cell inner membrane. The enzyme catalyses K(+)(in) + H(+)(in) = K(+)(out) + H(+)(out). Its function is as follows. Transport of potassium into the cell. Likely operates as a K(+):H(+) symporter. This is Probable potassium transport system protein Kup 2 from Rhodopseudomonas palustris (strain BisB18).